The sequence spans 273 residues: Dermonecrotic toxin SdSicTox-betaIIB1bxiv (273 aa).

Histidine 4 is a catalytic residue. Residues glutamate 24 and aspartate 26 each coordinate Mg(2+). The active-site Nucleophile is histidine 40. 2 disulfides stabilise this stretch: cysteine 44/cysteine 50 and cysteine 46/cysteine 189. Aspartate 84 provides a ligand contact to Mg(2+).

This sequence belongs to the arthropod phospholipase D family. Class II subfamily. Requires Mg(2+) as cofactor. As to expression, expressed by the venom gland.

The protein resides in the secreted. It carries out the reaction an N-(acyl)-sphingosylphosphocholine = an N-(acyl)-sphingosyl-1,3-cyclic phosphate + choline. The catalysed reaction is an N-(acyl)-sphingosylphosphoethanolamine = an N-(acyl)-sphingosyl-1,3-cyclic phosphate + ethanolamine. It catalyses the reaction a 1-acyl-sn-glycero-3-phosphocholine = a 1-acyl-sn-glycero-2,3-cyclic phosphate + choline. The enzyme catalyses a 1-acyl-sn-glycero-3-phosphoethanolamine = a 1-acyl-sn-glycero-2,3-cyclic phosphate + ethanolamine. In terms of biological role, dermonecrotic toxins cleave the phosphodiester linkage between the phosphate and headgroup of certain phospholipids (sphingolipid and lysolipid substrates), forming an alcohol (often choline) and a cyclic phosphate. This toxin acts on sphingomyelin (SM). It may also act on ceramide phosphoethanolamine (CPE), lysophosphatidylcholine (LPC) and lysophosphatidylethanolamine (LPE), but not on lysophosphatidylserine (LPS), and lysophosphatidylglycerol (LPG). It acts by transphosphatidylation, releasing exclusively cyclic phosphate products as second products. Induces dermonecrosis, hemolysis, increased vascular permeability, edema, inflammatory response, and platelet aggregation. The chain is Dermonecrotic toxin SdSicTox-betaIIB1bxiv from Sicarius cf. damarensis (strain GJB-2008) (Six-eyed sand spider).